We begin with the raw amino-acid sequence, 355 residues long: Peptide chain release factor 1 (355 aa).

Gln233 carries the N5-methylglutamine modification.

It belongs to the prokaryotic/mitochondrial release factor family. Post-translationally, methylated by PrmC. Methylation increases the termination efficiency of RF1.

The protein resides in the cytoplasm. Functionally, peptide chain release factor 1 directs the termination of translation in response to the peptide chain termination codons UAG and UAA. This Syntrophobacter fumaroxidans (strain DSM 10017 / MPOB) protein is Peptide chain release factor 1.